A 408-amino-acid chain; its full sequence is MTDRNIQVQSLDRSAVEDDAVEIVERKGLGHPDSICDGIAEHVCETLAREYRDRVGHVLHFNTDETQLVAGDAAPAFGGGNVIDPIYILVVGRATSHYVEADGTEHHIPVESIALEAAREYLRETLPHLDLETDVIVDVKLGEGSGDLQDVFTDDDDGPAVPMANDTSFGVGHAPLTETERIVLEAERSLNGPYAEHTPAVGEDVKVMGKREDDHIDLTIAAALVDAHVPDMDAYIAQVEAIREHVFDLATEHTDREVTVHVNTADDYESGSIYLTTTGTSAEQGDDGSVGRGNRANGLITPNRAMSMEATSGKNPVNHIGKIYNLLSTQIAEAVVAEVDGIRDLRVRLLSQIGRPIDEPHVADVEVVTEDGTAVADVDAEIERIVDAQLASVTDLTRRVIDGERTTF.

142 to 147 contributes to the ATP binding site; that stretch reads GEGSGD.

This sequence belongs to the AdoMet synthase 2 family. Mg(2+) is required as a cofactor.

The enzyme catalyses L-methionine + ATP + H2O = S-adenosyl-L-methionine + phosphate + diphosphate. The protein operates within amino-acid biosynthesis; S-adenosyl-L-methionine biosynthesis; S-adenosyl-L-methionine from L-methionine: step 1/1. In terms of biological role, catalyzes the formation of S-adenosylmethionine from methionine and ATP. This Halobacterium salinarum (strain ATCC 29341 / DSM 671 / R1) protein is S-adenosylmethionine synthase.